We begin with the raw amino-acid sequence, 359 residues long: GTP 3',8-cyclase (359 aa).

The Radical SAM core domain occupies 33–260 (RFGRRHDSLR…PTGRENPSAP (228 aa)). Arg42 provides a ligand contact to GTP. [4Fe-4S] cluster contacts are provided by Cys49 and Cys53. Position 55 (Tyr55) interacts with S-adenosyl-L-methionine. Residue Cys56 participates in [4Fe-4S] cluster binding. Arg93 lines the GTP pocket. Gly97 is a binding site for S-adenosyl-L-methionine. Thr124 provides a ligand contact to GTP. Ser148 is a binding site for S-adenosyl-L-methionine. Lys185 is a GTP binding site. Met219 is an S-adenosyl-L-methionine binding site. Residues Cys286 and Cys289 each contribute to the [4Fe-4S] cluster site. Residue 291–293 (RLR) coordinates GTP. Cys303 contacts [4Fe-4S] cluster.

Belongs to the radical SAM superfamily. MoaA family. Monomer and homodimer. [4Fe-4S] cluster serves as cofactor.

It carries out the reaction GTP + AH2 + S-adenosyl-L-methionine = (8S)-3',8-cyclo-7,8-dihydroguanosine 5'-triphosphate + 5'-deoxyadenosine + L-methionine + A + H(+). Its pathway is cofactor biosynthesis; molybdopterin biosynthesis. Functionally, catalyzes the cyclization of GTP to (8S)-3',8-cyclo-7,8-dihydroguanosine 5'-triphosphate. The protein is GTP 3',8-cyclase of Rhodopirellula baltica (strain DSM 10527 / NCIMB 13988 / SH1).